The following is an 859-amino-acid chain: DNA mismatch repair protein MutS (859 aa).

614–621 (GPNMGGKS) contributes to the ATP binding site.

The protein belongs to the DNA mismatch repair MutS family.

This protein is involved in the repair of mismatches in DNA. It is possible that it carries out the mismatch recognition step. This protein has a weak ATPase activity. In Histophilus somni (strain 2336) (Haemophilus somnus), this protein is DNA mismatch repair protein MutS.